Reading from the N-terminus, the 69-residue chain is Small ribosomal subunit protein bS21 (69 aa).

The tract at residues 49–69 is disordered; that stretch reads IESAKRKAEKKKRLFSKKDKA.

This sequence belongs to the bacterial ribosomal protein bS21 family.

In Leptospira borgpetersenii serovar Hardjo-bovis (strain JB197), this protein is Small ribosomal subunit protein bS21.